Consider the following 207-residue polypeptide: Thiamine-phosphate synthase (207 aa).

4-amino-2-methyl-5-(diphosphooxymethyl)pyrimidine-binding positions include 38–42 and Asn70; that span reads QYRNK. Mg(2+) is bound by residues Asp71 and Asp90. Ser109 is a 4-amino-2-methyl-5-(diphosphooxymethyl)pyrimidine binding site. A 2-[(2R,5Z)-2-carboxy-4-methylthiazol-5(2H)-ylidene]ethyl phosphate-binding site is contributed by 136-138; sequence TAT. Lys139 lines the 4-amino-2-methyl-5-(diphosphooxymethyl)pyrimidine pocket. 2-[(2R,5Z)-2-carboxy-4-methylthiazol-5(2H)-ylidene]ethyl phosphate contacts are provided by residues Gly165 and 185 to 186; that span reads VS.

Belongs to the thiamine-phosphate synthase family. Mg(2+) serves as cofactor.

The catalysed reaction is 2-[(2R,5Z)-2-carboxy-4-methylthiazol-5(2H)-ylidene]ethyl phosphate + 4-amino-2-methyl-5-(diphosphooxymethyl)pyrimidine + 2 H(+) = thiamine phosphate + CO2 + diphosphate. It catalyses the reaction 2-(2-carboxy-4-methylthiazol-5-yl)ethyl phosphate + 4-amino-2-methyl-5-(diphosphooxymethyl)pyrimidine + 2 H(+) = thiamine phosphate + CO2 + diphosphate. It carries out the reaction 4-methyl-5-(2-phosphooxyethyl)-thiazole + 4-amino-2-methyl-5-(diphosphooxymethyl)pyrimidine + H(+) = thiamine phosphate + diphosphate. It functions in the pathway cofactor biosynthesis; thiamine diphosphate biosynthesis; thiamine phosphate from 4-amino-2-methyl-5-diphosphomethylpyrimidine and 4-methyl-5-(2-phosphoethyl)-thiazole: step 1/1. Its function is as follows. Condenses 4-methyl-5-(beta-hydroxyethyl)thiazole monophosphate (THZ-P) and 2-methyl-4-amino-5-hydroxymethyl pyrimidine pyrophosphate (HMP-PP) to form thiamine monophosphate (TMP). The protein is Thiamine-phosphate synthase of Xanthomonas campestris pv. campestris (strain 8004).